Consider the following 334-residue polypeptide: S-adenosylmethionine:tRNA ribosyltransferase-isomerase (334 aa).

It belongs to the QueA family. Monomer.

It is found in the cytoplasm. It catalyses the reaction 7-aminomethyl-7-carbaguanosine(34) in tRNA + S-adenosyl-L-methionine = epoxyqueuosine(34) in tRNA + adenine + L-methionine + 2 H(+). It participates in tRNA modification; tRNA-queuosine biosynthesis. Functionally, transfers and isomerizes the ribose moiety from AdoMet to the 7-aminomethyl group of 7-deazaguanine (preQ1-tRNA) to give epoxyqueuosine (oQ-tRNA). The sequence is that of S-adenosylmethionine:tRNA ribosyltransferase-isomerase from Rubrobacter xylanophilus (strain DSM 9941 / JCM 11954 / NBRC 16129 / PRD-1).